We begin with the raw amino-acid sequence, 219 residues long: Cytochrome b6 (219 aa).

The helical transmembrane segment at 32–52 (IFYCFGGIVLTCFIIQAATGF) threads the bilayer. Cys-35 is a heme c binding site. The heme b site is built by His-86 and His-100. The next 3 helical transmembrane spans lie at 90–110 (SGLM…TAGF), 116–136 (LTWI…VTGY), and 190–210 (AHTF…FLMI). Heme b-binding residues include His-191 and His-206.

The protein belongs to the cytochrome b family. PetB subfamily. The 4 large subunits of the cytochrome b6-f complex are cytochrome b6, subunit IV (17 kDa polypeptide, PetD), cytochrome f and the Rieske protein, while the 4 small subunits are PetG, PetL, PetM and PetN. The complex functions as a dimer. It depends on heme b as a cofactor. Heme c serves as cofactor.

The protein resides in the plastid. The protein localises to the chloroplast thylakoid membrane. Component of the cytochrome b6-f complex, which mediates electron transfer between photosystem II (PSII) and photosystem I (PSI), cyclic electron flow around PSI, and state transitions. This is Cytochrome b6 from Amphidinium operculatum (Dinoflagellate).